We begin with the raw amino-acid sequence, 276 residues long: Diaminopimelate epimerase (276 aa).

Substrate-binding residues include N13, Q46, and N66. The active-site Proton donor is the C75. Residues 76 to 77 (GN), N159, N192, and 210 to 211 (ER) contribute to the substrate site. The Proton acceptor role is filled by C219. 220–221 (GT) is a substrate binding site.

Belongs to the diaminopimelate epimerase family. In terms of assembly, homodimer.

The protein localises to the cytoplasm. The catalysed reaction is (2S,6S)-2,6-diaminopimelate = meso-2,6-diaminopimelate. It participates in amino-acid biosynthesis; L-lysine biosynthesis via DAP pathway; DL-2,6-diaminopimelate from LL-2,6-diaminopimelate: step 1/1. Catalyzes the stereoinversion of LL-2,6-diaminopimelate (L,L-DAP) to meso-diaminopimelate (meso-DAP), a precursor of L-lysine and an essential component of the bacterial peptidoglycan. In Pseudomonas aeruginosa (strain UCBPP-PA14), this protein is Diaminopimelate epimerase.